A 479-amino-acid polypeptide reads, in one-letter code: Lysosomal protective protein (479 aa).

Positions 1-27 are cleaved as a signal peptide; that stretch reads MFRAALWPPVLLLLQLLLLACAPGGEG. 4 disulfide bridges follow: C87–C361, C239–C255, C240–C245, and C280–C330. N144 carries an N-linked (GlcNAc...) asparagine glycan. S177 is a catalytic residue. Residue N332 is glycosylated (N-linked (GlcNAc...) asparagine). Catalysis depends on residues D399 and H456.

Belongs to the peptidase S10 family. Heterodimer of a 32 kDa chain and a 20 kDa chain; disulfide-linked.

The protein localises to the lysosome. The enzyme catalyses Release of a C-terminal amino acid with broad specificity.. In terms of biological role, protective protein appears to be essential for both the activity of beta-galactosidase and neuraminidase, it associates with these enzymes and exerts a protective function necessary for their stability and activity. This protein is also a carboxypeptidase and can deamidate tachykinins. In Bos taurus (Bovine), this protein is Lysosomal protective protein (CTSA).